The sequence spans 551 residues: Arginine--tRNA ligase (551 aa).

The 'HIGH' region signature appears at 123–133 (ANPTGPLTIGR).

It belongs to the class-I aminoacyl-tRNA synthetase family. In terms of assembly, monomer.

The protein localises to the cytoplasm. The enzyme catalyses tRNA(Arg) + L-arginine + ATP = L-arginyl-tRNA(Arg) + AMP + diphosphate. The protein is Arginine--tRNA ligase of Chlorobium limicola (strain DSM 245 / NBRC 103803 / 6330).